Consider the following 391-residue polypeptide: NAD(P)H-quinone oxidoreductase subunit H, chloroplastic (391 aa).

The protein belongs to the complex I 49 kDa subunit family. In terms of assembly, NDH is composed of at least 16 different subunits, 5 of which are encoded in the nucleus.

The protein resides in the plastid. Its subcellular location is the chloroplast thylakoid membrane. The catalysed reaction is a plastoquinone + NADH + (n+1) H(+)(in) = a plastoquinol + NAD(+) + n H(+)(out). It carries out the reaction a plastoquinone + NADPH + (n+1) H(+)(in) = a plastoquinol + NADP(+) + n H(+)(out). NDH shuttles electrons from NAD(P)H:plastoquinone, via FMN and iron-sulfur (Fe-S) centers, to quinones in the photosynthetic chain and possibly in a chloroplast respiratory chain. The immediate electron acceptor for the enzyme in this species is believed to be plastoquinone. Couples the redox reaction to proton translocation, and thus conserves the redox energy in a proton gradient. This chain is NAD(P)H-quinone oxidoreductase subunit H, chloroplastic, found in Chaetosphaeridium globosum (Charophycean green alga).